A 145-amino-acid chain; its full sequence is RNAP inhibitory protein (145 aa).

The segment at 110–123 (HIKKLNLNSLAMLS) is C-terminal tail, binds in the RNAP DNA-binding channel.

This sequence belongs to the viral ORF131/RIP family. As to quaternary structure, interacts with host RNA polymerase (RNAP) subunits Rpo1N and Rpo2.

The protein localises to the virion. Plays a role in the inhibition of global transcription by interacting with the RNA polymerase (RNAP) clamp, locking it in a fixed position and inhibiting the formation and/or stability of the pre-initiation complex (PIC). Also overlaps with the transcription factor B binding site; overall RIP probably interferes with DNA loading onto RNAP but does not displace DNA once it is loaded. May play a role in virus particle assembly, possibly by dissociating active RNAP from the virus genome. The chain is RNAP inhibitory protein from Acidianus two-tailed virus (ATV).